The sequence spans 478 residues: Cytochrome c-552 (478 aa).

Positions 1-26 (MARKTLRARRFFSLIFPFFFITSVYA) are cleaved as a signal peptide. Residue histidine 94 participates in heme c binding. Residues cysteine 122, cysteine 125, and lysine 126 each coordinate heme. Heme c-binding residues include cysteine 160, cysteine 163, histidine 164, cysteine 209, cysteine 212, and histidine 213. Ca(2+)-binding residues include glutamate 215, tyrosine 216, lysine 261, and glutamine 263. Tyrosine 216 is a binding site for substrate. Histidine 264 contacts substrate. Heme c is bound by residues histidine 275, cysteine 282, cysteine 285, histidine 286, histidine 301, cysteine 314, cysteine 317, histidine 318, and histidine 393.

Belongs to the cytochrome c-552 family. The cofactor is Ca(2+). Requires heme c as cofactor.

Its subcellular location is the periplasm. It carries out the reaction 6 Fe(III)-[cytochrome c] + NH4(+) + 2 H2O = 6 Fe(II)-[cytochrome c] + nitrite + 8 H(+). It functions in the pathway nitrogen metabolism; nitrate reduction (assimilation). In terms of biological role, catalyzes the reduction of nitrite to ammonia, consuming six electrons in the process. This Salmonella schwarzengrund (strain CVM19633) protein is Cytochrome c-552.